Consider the following 313-residue polypeptide: tRNA dimethylallyltransferase (313 aa).

Residue 20–27 (GPTGTGKS) coordinates ATP. Residue 22–27 (TGTGKS) coordinates substrate.

The protein belongs to the IPP transferase family. Monomer. Mg(2+) is required as a cofactor.

The enzyme catalyses adenosine(37) in tRNA + dimethylallyl diphosphate = N(6)-dimethylallyladenosine(37) in tRNA + diphosphate. Catalyzes the transfer of a dimethylallyl group onto the adenine at position 37 in tRNAs that read codons beginning with uridine, leading to the formation of N6-(dimethylallyl)adenosine (i(6)A). The protein is tRNA dimethylallyltransferase of Kocuria rhizophila (strain ATCC 9341 / DSM 348 / NBRC 103217 / DC2201).